A 118-amino-acid chain; its full sequence is Ribosome-binding factor A (118 aa).

The protein belongs to the RbfA family. As to quaternary structure, monomer. Binds 30S ribosomal subunits, but not 50S ribosomal subunits or 70S ribosomes.

The protein localises to the cytoplasm. One of several proteins that assist in the late maturation steps of the functional core of the 30S ribosomal subunit. Associates with free 30S ribosomal subunits (but not with 30S subunits that are part of 70S ribosomes or polysomes). Required for efficient processing of 16S rRNA. May interact with the 5'-terminal helix region of 16S rRNA. The protein is Ribosome-binding factor A of Bacillus cereus (strain B4264).